The sequence spans 361 residues: Cyclin-Y-like protein 2 (361 aa).

The Cyclin N-terminal domain maps to 204-286 (MRLTAEFAIV…QFLKLINYNN (83 aa)).

It belongs to the cyclin family. Cyclin Y subfamily.

The sequence is that of Cyclin-Y-like protein 2 (CCNYL2) from Homo sapiens (Human).